The chain runs to 235 residues: MEEAIDDHVKLPQKRFYRQRAHSNPIADHSFDYPLLPELSNWNELYPNIGNRQVVFADIGCGYGGFLVTLGETFPDKLAIGMEIRVKVSDYVMDRIKALRQRHKGKYENIACIRTNAMKYLPNYFRKHQLEKLFFLYPDPHFKKAKHKWRIINPTLLSEYAYVLRPGGKIYTVTDVRELHEWMCKHIEEHPCFKRLPDTEAQEDILAPKLLDSSEEGQKVTRMSGEKFMAIFTRL.

Residues Gly-60, Glu-83 to Ile-84, Asn-116 to Ala-117, and Leu-136 contribute to the S-adenosyl-L-methionine site. The active site involves Asp-139. Position 214-216 (Ser-214–Glu-216) interacts with S-adenosyl-L-methionine.

It belongs to the class I-like SAM-binding methyltransferase superfamily. TrmB family.

It is found in the nucleus. The catalysed reaction is guanosine(46) in tRNA + S-adenosyl-L-methionine = N(7)-methylguanosine(46) in tRNA + S-adenosyl-L-homocysteine. It functions in the pathway tRNA modification; N(7)-methylguanine-tRNA biosynthesis. Catalyzes the formation of N(7)-methylguanine at position 46 (m7G46) in tRNA. The chain is tRNA (guanine-N(7)-)-methyltransferase from Anopheles gambiae (African malaria mosquito).